A 256-amino-acid polypeptide reads, in one-letter code: Acetyl-coenzyme A carboxylase carboxyl transferase subunit alpha (256 aa).

The 236-residue stretch at 1–236 folds into the CoA carboxyltransferase C-terminal domain; sequence MSDVARILKE…KTAIVDELAE (236 aa).

The protein belongs to the AccA family. Acetyl-CoA carboxylase is a heterohexamer composed of biotin carboxyl carrier protein (AccB), biotin carboxylase (AccC) and two subunits each of ACCase subunit alpha (AccA) and ACCase subunit beta (AccD).

It localises to the cytoplasm. The catalysed reaction is N(6)-carboxybiotinyl-L-lysyl-[protein] + acetyl-CoA = N(6)-biotinyl-L-lysyl-[protein] + malonyl-CoA. Its pathway is lipid metabolism; malonyl-CoA biosynthesis; malonyl-CoA from acetyl-CoA: step 1/1. In terms of biological role, component of the acetyl coenzyme A carboxylase (ACC) complex. First, biotin carboxylase catalyzes the carboxylation of biotin on its carrier protein (BCCP) and then the CO(2) group is transferred by the carboxyltransferase to acetyl-CoA to form malonyl-CoA. This Streptococcus thermophilus (strain ATCC BAA-491 / LMD-9) protein is Acetyl-coenzyme A carboxylase carboxyl transferase subunit alpha.